A 402-amino-acid polypeptide reads, in one-letter code: Probable sugar efflux transporter (402 aa).

12 helical membrane-spanning segments follow: residues 15-35 (VLIMACAGFIFNTTEFVPVAM), 51-71 (GLMMTVYAWTVLIMSLPAMLA), 84-104 (LFIIFIVGHILLVIAWNFWIL), 109-129 (MCIALAHSVFWSITASLVMRI), 137-157 (QALGMLAIGTALATILGLPIG), 168-188 (VTFGIIAVLALSIMFLIIRLL), 209-229 (PLLLWLYVTTAIVISAHFTAY), 245-265 (NFATAVLLVFGFSGIAASLLF), 276-296 (FIVVSMSLLMFSLLLLLFSTE), 297-317 (AIIAMFSLVFIWGIGISCIGL), 333-353 (VATAIYSGIFNAGIGAGALFG), and 365-385 (IGYTGAALGLIGFIIFITTHL).

The protein belongs to the major facilitator superfamily. SotB (TC 2.A.1.2) family.

Its subcellular location is the cell inner membrane. Involved in the efflux of sugars. The physiological role may be the reduction of the intracellular concentration of toxic sugars or sugar metabolites. The polypeptide is Probable sugar efflux transporter (Haemophilus influenzae (strain 86-028NP)).